The chain runs to 1015 residues: MSSSYITDQGPGSGLRVPARSWLNSDAPSLSLNGDWRFRLLPTAPGTPGAGSVLATGETVEAVASESFDDSSWDTLAVPSHWVLAEDGKYGRPIYTNVQYPFPIDPPFVPDANPTGDYRRTFDVPDSWFESTTAALTLRFDGVESRYKVWVNGVEIGVGSGSRLAQEFDVSEALRPGKNLLVVRVHQWSAASYLEDQDQWWLPGIFRDVKLQARPVGGLTDVWLRTDWSGSGTITPEITADPAAFPVTLRVPELGLEVIWDSPADVAPVSIDAVEPWSAEVPRLYDASVSSAAESISLRLGFRTVKIVGDQFLVNGRKVIFHGVNRHETNADRGRVFDEASAREDLALMKRFNVNAIRTSHYPPHPRFLDLADELGFWVILECDLETHGFHALKWVGNPSDDPAWRDALVDRMERTVERDKNHASIVMWSLGNESGTGANLAAMAAWTHARDLSRPVHYEGDYTGAYTDVYSRMYSSIPETDSIGRNDSHALLLGCNAIESARQRTRPFILCEYVHAMGNGPGAIDQYEDLVDKYPRLHGGFVWEWRDHGIRTRTADGTEFFAYGGDFDEVIHDGNFVMDGMILSDSTPTPGLFEYKQIVSPIRLALTLNAEGNAGLTVANLRHTSDASDVVLRWRVEHNGTRVDAGELTTDGANGPLQAGDSLTLTLPTIVAAAEGETWLSVEAVLREATAWAPAGHPLSETQLDLSPAQPPLRVPRPASPIAGAAPVELGPATFDAGSLVTLAGLPVAGPRLELWRAPTDNDKGQGFGAYGPEDPWINSGRGVPAPSSAVVWQQAGLDRLTRRVEDVAALPQGLRVRSRYAAANSEHDVAVEENWQLSGDELWLRIDIAPSAGWDLVFPRIGVRLDLPSEVDGASWFGAGPRESYPDSLHSAVVGTHGGSLEELNVNYARPQETGHHSDVRWVELSRDGAPWLRIEADPDALGRRPGFSLAKNTAQEVALAPHPHELPESQHSYLYLDAAQHGLGSRACGPDVWPDFALRPEARTLVLRIRAA.

The Proton donor role is filled by glutamate 434. Glutamate 513 serves as the catalytic Nucleophile.

Belongs to the glycosyl hydrolase 2 family. It depends on Mg(2+) as a cofactor. The cofactor is Mn(2+).

The catalysed reaction is Hydrolysis of terminal non-reducing beta-D-galactose residues in beta-D-galactosides.. This Arthrobacter sp. (strain B7) protein is Beta-galactosidase (lacZ).